We begin with the raw amino-acid sequence, 319 residues long: Geranylgeranyl pyrophosphate synthase (319 aa).

Residues Lys42, Arg45, and His74 each coordinate isopentenyl diphosphate. Asp81 and Asp85 together coordinate Mg(2+). Arg90 contributes to the dimethylallyl diphosphate binding site. Arg91 is an isopentenyl diphosphate binding site. The dimethylallyl diphosphate site is built by Lys172, Thr173, Gln210, Lys226, and Lys236.

It belongs to the FPP/GGPP synthase family. Homodimer. It depends on Mg(2+) as a cofactor.

It catalyses the reaction isopentenyl diphosphate + dimethylallyl diphosphate = (2E)-geranyl diphosphate + diphosphate. The enzyme catalyses isopentenyl diphosphate + (2E)-geranyl diphosphate = (2E,6E)-farnesyl diphosphate + diphosphate. It carries out the reaction isopentenyl diphosphate + (2E,6E)-farnesyl diphosphate = (2E,6E,10E)-geranylgeranyl diphosphate + diphosphate. The protein operates within isoprenoid biosynthesis; geranyl diphosphate biosynthesis; geranyl diphosphate from dimethylallyl diphosphate and isopentenyl diphosphate: step 1/1. It functions in the pathway isoprenoid biosynthesis; farnesyl diphosphate biosynthesis; farnesyl diphosphate from geranyl diphosphate and isopentenyl diphosphate: step 1/1. It participates in isoprenoid biosynthesis; geranylgeranyl diphosphate biosynthesis; geranylgeranyl diphosphate from farnesyl diphosphate and isopentenyl diphosphate: step 1/1. Catalyzes the addition of 3 molecules of isopentenyl diphosphate (IPP) onto dimethylallyl diphosphate (DMAPP) to form geranylgeranyl pyrophosphate (GGPP). Catalyzes the synthesis of geranylgeranyl pyrophosphate as a major product and of farnesyl pyrophosphate in smaller amounts. This chain is Geranylgeranyl pyrophosphate synthase, found in Geoglobus acetivorans.